Reading from the N-terminus, the 162-residue chain is MSALEDVRTVALPRDCVSTVQAHLRSVGQQGHEGMALWVGVQQDQHFVIAETVIPAQRHIRTSDGVCVMVPAEELHRLNVWLYKRGLTLLAQIHSHPGRAYHSTTDDAYAVATTIGCLSLVVPNFAREPFDFAHVAAYRLDAKANWNEVPSAVLTRMITITS.

The MPN domain maps to 9 to 147; it reads TVALPRDCVS…YRLDAKANWN (139 aa). The Zn(2+) site is built by H94, H96, and D107.

This sequence belongs to the peptidase M67B family.

The protein is Probable metalloprotease y4jG of Sinorhizobium fredii (strain NBRC 101917 / NGR234).